We begin with the raw amino-acid sequence, 805 residues long: N-(5-amino-5-carboxypentanoyl)-L-cysteinyl-D-valine synthase (805 aa).

The tract at residues 783–805 (PDTGGGAVGSTTTGGVRGELREI) is disordered.

It belongs to the ATP-dependent AMP-binding enzyme family. Requires pantetheine 4'-phosphate as cofactor.

It carries out the reaction L-2-aminoadipate + L-valine + L-cysteine + 3 ATP + H2O = N-[(5S)-5-amino-5-carboxypentanoyl]-L-cysteinyl-D-valine + 3 AMP + 3 diphosphate + 3 H(+). It participates in antibiotic biosynthesis; penicillin G biosynthesis; penicillin G from L-alpha-aminoadipate and L-cysteine and L-valine: step 1/3. Functionally, each of the constituent amino acids of ACV are activated as aminoacyl-adenylates with peptide bonds formed through the participation of amino acid thioester intermediates. This is N-(5-amino-5-carboxypentanoyl)-L-cysteinyl-D-valine synthase (pcbAB) from Streptomyces clavuligerus.